We begin with the raw amino-acid sequence, 167 residues long: Urease accessory protein UreE (167 aa).

This sequence belongs to the UreE family.

It is found in the cytoplasm. Functionally, involved in urease metallocenter assembly. Binds nickel. Probably functions as a nickel donor during metallocenter assembly. This chain is Urease accessory protein UreE, found in Pseudomonas paraeruginosa (strain DSM 24068 / PA7) (Pseudomonas aeruginosa (strain PA7)).